A 430-amino-acid chain; its full sequence is 3-oxo-tetronate kinase (430 aa).

ATP contacts are provided by residues Ser268, 366–369, and Gly410; that span reads GGET.

The protein belongs to the four-carbon acid sugar kinase family.

The catalysed reaction is 3-dehydro-L-erythronate + ATP = 3-dehydro-4-O-phospho-L-erythronate + ADP + H(+). The enzyme catalyses 3-dehydro-D-erythronate + ATP = 3-dehydro-4-O-phospho-D-erythronate + ADP + H(+). In terms of biological role, catalyzes the ATP-dependent phosphorylation of 3-oxo-tetronate to 3-oxo-tetronate 4-phosphate. The sequence is that of 3-oxo-tetronate kinase from Pseudomonas fluorescens (strain ATCC BAA-477 / NRRL B-23932 / Pf-5).